Consider the following 432-residue polypeptide: Adenylosuccinate synthetase (432 aa).

Residues 13 to 19 (GDEGKGK) and 41 to 43 (GHT) contribute to the GTP site. The active-site Proton acceptor is the Asp-14. Mg(2+) contacts are provided by Asp-14 and Gly-41. IMP-binding positions include 14–17 (DEGK), 39–42 (NAGH), Thr-130, Arg-144, Gln-225, Thr-240, and Arg-304. The active-site Proton donor is the His-42. 300 to 306 (ATTGRRR) provides a ligand contact to substrate. GTP is bound by residues Arg-306, 332 to 334 (KLD), and 415 to 417 (STG).

Belongs to the adenylosuccinate synthetase family. As to quaternary structure, homodimer. The cofactor is Mg(2+).

It localises to the cytoplasm. It catalyses the reaction IMP + L-aspartate + GTP = N(6)-(1,2-dicarboxyethyl)-AMP + GDP + phosphate + 2 H(+). The protein operates within purine metabolism; AMP biosynthesis via de novo pathway; AMP from IMP: step 1/2. In terms of biological role, plays an important role in the de novo pathway of purine nucleotide biosynthesis. Catalyzes the first committed step in the biosynthesis of AMP from IMP. In Enterobacter sp. (strain 638), this protein is Adenylosuccinate synthetase.